Here is a 2167-residue protein sequence, read N- to C-terminus: Glutamate synthase 1 [NADH], chloroplastic (2167 aa).

The tract at residues 1–31 (MSAAQGMAYKLRTDAAPTGAGRRARRSHSSV) is disordered. The N-terminal 36 residues, 1 to 36 (MSAAQGMAYKLRTDAAPTGAGRRARRSHSSVAAPYR), are a transit peptide targeting the chloroplast. C100 acts as the Nucleophile in catalysis. In terms of domain architecture, Glutamine amidotransferase type-2 spans 100–504 (CGVGFVAELS…PGMMLLVDFE (405 aa)). The interval 1022–1042 (KSNTGEGGEQPSRMEPLANGS) is disordered. 1192–1249 (LAETHQTLVANGLRGRAILQTDGQLKTGKDVAVACLLGAEEFGFSTAPLITLGCIMMR) lines the FMN pocket. Residues C1245, C1251, and C1256 each coordinate [3Fe-4S] cluster. 1956–1970 (GGGDTGTDCIGTSIR) contributes to the NAD(+) binding site.

It belongs to the glutamate synthase family. As to quaternary structure, monomer. Requires [3Fe-4S] cluster as cofactor. The cofactor is FAD. FMN serves as cofactor. Highly expressed in roots.

The protein localises to the plastid. It is found in the chloroplast. It carries out the reaction 2 L-glutamate + NAD(+) = L-glutamine + 2-oxoglutarate + NADH + H(+). Its pathway is amino-acid biosynthesis; L-glutamate biosynthesis via GLT pathway; L-glutamate from 2-oxoglutarate and L-glutamine (NAD(+) route): step 1/1. The protein operates within energy metabolism; nitrogen metabolism. Functionally, involved in glutamate biosynthesis and plays a major role in the primary ammonium ions assimilation in seedling roots. May be involved in the reutilization of glutamine in developing organs. Plays a role in the development of tillers. The protein is Glutamate synthase 1 [NADH], chloroplastic of Oryza sativa subsp. japonica (Rice).